An 801-amino-acid polypeptide reads, in one-letter code: Protein SDA1 homolog (801 aa).

4 disordered regions span residues 1–40, 495–517, 536–647, and 739–801; these read MGKVSKSPGKGEKRIGKVGKKNGKSNAPTEGSNSGKASRF, RKDRGKPQEKDDEDEEYNGFARP, GEQG…SKNS, and DYKF…RKPQ. Positions 24–40 are enriched in polar residues; the sequence is KSNAPTEGSNSGKASRF. 2 stretches are compositionally biased toward acidic residues: residues 544 to 568 and 583 to 633; these read DGTDSELDVSDVDTDDVDTDDDADE and NDAE…EASE. Composition is skewed to basic residues over residues 770-779 and 787-801; these read NKIRGRNRQR and SLRHYLMRQSGRKPQ.

This sequence belongs to the SDA1 family.

Its subcellular location is the nucleus. Required for 60S pre-ribosomal subunits export to the cytoplasm. Required for normal somatic gonad development and for regulation of germline development and proliferation. This chain is Protein SDA1 homolog (pro-3), found in Caenorhabditis elegans.